The chain runs to 58 residues: Small ribosomal subunit protein bS21 (58 aa).

The tract at residues D39 to R58 is disordered. Over residues V43–R58 the composition is skewed to basic residues.

The protein belongs to the bacterial ribosomal protein bS21 family.

This is Small ribosomal subunit protein bS21 (rpsU) from Chlamydia pneumoniae (Chlamydophila pneumoniae).